Here is an 89-residue protein sequence, read N- to C-terminus: FXYD domain-containing ion transport regulator 4 (89 aa).

A signal peptide spans 1–20 (MERVTLALLLLAGLTALEAN). The Extracellular portion of the chain corresponds to 21 to 38 (DPFANKDDPFYYDWKNLQ). A helical transmembrane segment spans residues 39–59 (LSGLICGGLLAIAGIAAVLSG). The Cytoplasmic portion of the chain corresponds to 60-89 (KCKCKSSQKQHSPVPEKAIPLITPGSATTC).

The protein belongs to the FXYD family. Regulatory subunit of the sodium/potassium-transporting ATPase which is composed of a catalytic alpha subunit, a non-catalytic beta subunit and a regulatory subunit. The regulatory subunit, a member of the FXYD protein family, modulates the enzymatic activity in a tissue- and isoform-specific way by changing affinities of the Na+/K+-ATPase toward Na(+), K(+) or ATP.

It localises to the cell membrane. It is found in the basolateral cell membrane. In terms of biological role, associates with and regulates the activity of the sodium/potassium-transporting ATPase (NKA) which catalyzes the hydrolysis of ATP coupled with the exchange of Na(+) and K(+) ions across the plasma membrane. Increases the apparent affinity of the transporter for Na(+) and increases NKA activity. The protein is FXYD domain-containing ion transport regulator 4 (FXYD4) of Homo sapiens (Human).